A 400-amino-acid chain; its full sequence is Elongation factor Tu (400 aa).

The tr-type G domain maps to 10-209; sequence KPHVNIGTIG…AVDKYIPTPQ (200 aa). The interval 19-26 is G1; the sequence is GHVDHGKT. Position 19–26 (19–26) interacts with GTP; sequence GHVDHGKT. Mg(2+) is bound at residue threonine 26. Residues 60-64 form a G2 region; that stretch reads GITIN. Residues 81 to 84 form a G3 region; the sequence is DCPG. GTP is bound by residues 81-85 and 136-139; these read DCPGH and NKVD. A G4 region spans residues 136-139; it reads NKVD. The interval 174–176 is G5; that stretch reads SAL.

The protein belongs to the TRAFAC class translation factor GTPase superfamily. Classic translation factor GTPase family. EF-Tu/EF-1A subfamily. In terms of assembly, monomer.

It is found in the cytoplasm. It carries out the reaction GTP + H2O = GDP + phosphate + H(+). Its function is as follows. GTP hydrolase that promotes the GTP-dependent binding of aminoacyl-tRNA to the A-site of ribosomes during protein biosynthesis. This chain is Elongation factor Tu, found in Caldicellulosiruptor bescii (strain ATCC BAA-1888 / DSM 6725 / KCTC 15123 / Z-1320) (Anaerocellum thermophilum).